We begin with the raw amino-acid sequence, 297 residues long: ATP phosphoribosyltransferase (297 aa).

It belongs to the ATP phosphoribosyltransferase family.

It is found in the cytoplasm. It catalyses the reaction 1-(5-phospho-beta-D-ribosyl)-ATP + diphosphate = 5-phospho-alpha-D-ribose 1-diphosphate + ATP. It functions in the pathway amino-acid biosynthesis; L-histidine biosynthesis; L-histidine from 5-phospho-alpha-D-ribose 1-diphosphate: step 1/9. Catalyzes the condensation of ATP and 5-phosphoribose 1-diphosphate to form N'-(5'-phosphoribosyl)-ATP (PR-ATP). Has a crucial role in the pathway because the rate of histidine biosynthesis seems to be controlled primarily by regulation of the enzymatic activity. The polypeptide is ATP phosphoribosyltransferase (HIS1) (Eremothecium gossypii (strain ATCC 10895 / CBS 109.51 / FGSC 9923 / NRRL Y-1056) (Yeast)).